We begin with the raw amino-acid sequence, 699 residues long: Glycine--tRNA ligase beta subunit (699 aa).

This sequence belongs to the class-II aminoacyl-tRNA synthetase family. As to quaternary structure, tetramer of two alpha and two beta subunits.

The protein resides in the cytoplasm. The enzyme catalyses tRNA(Gly) + glycine + ATP = glycyl-tRNA(Gly) + AMP + diphosphate. The chain is Glycine--tRNA ligase beta subunit from Baumannia cicadellinicola subsp. Homalodisca coagulata.